Here is an 884-residue protein sequence, read N- to C-terminus: Translation initiation factor IF-2 (884 aa).

Disordered regions lie at residues 42-62 (DVQK…QEEV) and 123-254 (EPKG…GGKK). Residues 194–212 (PAERREVVIPPKRKMEERA) are compositionally biased toward basic and acidic residues. The segment covering 234 to 248 (EPETPAGGAPGAKKG) has biased composition (low complexity). The 170-residue stretch at 384–553 (KRPPVVTIMG…LLQADVMDLK (170 aa)) folds into the tr-type G domain. Residues 393–400 (GHVDHGKT) are G1. 393-400 (GHVDHGKT) contacts GTP. Positions 418-422 (GITQH) are G2. The interval 439–442 (DTPG) is G3. GTP is bound by residues 439-443 (DTPGH) and 493-496 (NKID). The interval 493–496 (NKID) is G4. Residues 529–531 (SAK) form a G5 region.

It belongs to the TRAFAC class translation factor GTPase superfamily. Classic translation factor GTPase family. IF-2 subfamily.

It localises to the cytoplasm. In terms of biological role, one of the essential components for the initiation of protein synthesis. Protects formylmethionyl-tRNA from spontaneous hydrolysis and promotes its binding to the 30S ribosomal subunits. Also involved in the hydrolysis of GTP during the formation of the 70S ribosomal complex. The polypeptide is Translation initiation factor IF-2 (Geobacter metallireducens (strain ATCC 53774 / DSM 7210 / GS-15)).